Here is a 481-residue protein sequence, read N- to C-terminus: Trigger factor (481 aa).

The PPIase FKBP-type domain occupies 174 to 261 (GDIAVVSFKG…LKDLKEKELP (88 aa)). The segment at 435 to 481 (VKEKTTKASQASKTTKAKKTTTKTTKATKTATKTTKATKTQNKKEKK) is disordered. Residues 456 to 474 (TKTTKATKTATKTTKATKT) are compositionally biased toward low complexity.

This sequence belongs to the FKBP-type PPIase family. Tig subfamily.

It localises to the cytoplasm. It catalyses the reaction [protein]-peptidylproline (omega=180) = [protein]-peptidylproline (omega=0). Its function is as follows. Involved in protein export. Acts as a chaperone by maintaining the newly synthesized protein in an open conformation. Functions as a peptidyl-prolyl cis-trans isomerase. This chain is Trigger factor, found in Prochlorococcus marinus (strain MIT 9312).